Reading from the N-terminus, the 330-residue chain is Ketol-acid reductoisomerase (NADP(+)) (330 aa).

One can recognise a KARI N-terminal Rossmann domain in the interval 1 to 181 (MNIYYEQDAD…GGTKAGVIET (181 aa)). NADP(+)-binding positions include 24 to 27 (YGSQ), K47, S50, S52, and 82 to 85 (DQTQ). H107 is an active-site residue. G133 is a binding site for NADP(+). The region spanning 182-327 (SFKDETETDL…AKLRGMMSWL (146 aa)) is the KARI C-terminal knotted domain. Residues D190, E194, E226, and E230 each coordinate Mg(2+). S251 contributes to the substrate binding site.

The protein belongs to the ketol-acid reductoisomerase family. The cofactor is Mg(2+).

It carries out the reaction (2R)-2,3-dihydroxy-3-methylbutanoate + NADP(+) = (2S)-2-acetolactate + NADPH + H(+). The catalysed reaction is (2R,3R)-2,3-dihydroxy-3-methylpentanoate + NADP(+) = (S)-2-ethyl-2-hydroxy-3-oxobutanoate + NADPH + H(+). It participates in amino-acid biosynthesis; L-isoleucine biosynthesis; L-isoleucine from 2-oxobutanoate: step 2/4. Its pathway is amino-acid biosynthesis; L-valine biosynthesis; L-valine from pyruvate: step 2/4. Its function is as follows. Involved in the biosynthesis of branched-chain amino acids (BCAA). Catalyzes an alkyl-migration followed by a ketol-acid reduction of (S)-2-acetolactate (S2AL) to yield (R)-2,3-dihydroxy-isovalerate. In the isomerase reaction, S2AL is rearranged via a Mg-dependent methyl migration to produce 3-hydroxy-3-methyl-2-ketobutyrate (HMKB). In the reductase reaction, this 2-ketoacid undergoes a metal-dependent reduction by NADPH to yield (R)-2,3-dihydroxy-isovalerate. The sequence is that of Ketol-acid reductoisomerase (NADP(+)) from Chlorobaculum tepidum (strain ATCC 49652 / DSM 12025 / NBRC 103806 / TLS) (Chlorobium tepidum).